The following is a 122-amino-acid chain: Large ribosomal subunit protein uL14c (122 aa).

This sequence belongs to the universal ribosomal protein uL14 family. In terms of assembly, part of the 50S ribosomal subunit.

The protein resides in the plastid. The protein localises to the chloroplast. Functionally, binds to 23S rRNA. The sequence is that of Large ribosomal subunit protein uL14c from Eucalyptus globulus subsp. globulus (Tasmanian blue gum).